The chain runs to 257 residues: Acetylglutamate kinase (257 aa).

Substrate contacts are provided by residues 43–44 (GG), Arg-65, and Asn-157. ATP-binding positions include 180-185 (DVSGIL) and 208-210 (IIT).

It belongs to the acetylglutamate kinase family. ArgB subfamily. In terms of assembly, homodimer.

The protein localises to the cytoplasm. It carries out the reaction N-acetyl-L-glutamate + ATP = N-acetyl-L-glutamyl 5-phosphate + ADP. The protein operates within amino-acid biosynthesis; L-arginine biosynthesis; N(2)-acetyl-L-ornithine from L-glutamate: step 2/4. Its function is as follows. Catalyzes the ATP-dependent phosphorylation of N-acetyl-L-glutamate. The sequence is that of Acetylglutamate kinase from Escherichia coli O139:H28 (strain E24377A / ETEC).